Consider the following 490-residue polypeptide: Fumitremorgin C monooxygenase (490 aa).

Residues 12 to 32 (LGVVGASLIVILGIILLFPLG) form a helical membrane-spanning segment. C442 lines the heme pocket.

The protein belongs to the cytochrome P450 family. Requires heme as cofactor.

It localises to the membrane. It carries out the reaction fumitremorgin C + 2 reduced [NADPH--hemoprotein reductase] + 2 O2 = 12alpha,13alpha-dihydroxyfumitremorgin C + 2 oxidized [NADPH--hemoprotein reductase] + 2 H2O + 2 H(+). Its pathway is mycotoxin biosynthesis. Its function is as follows. Cytochrome P450 monooxygenase; part of the gene cluster that mediates the biosynthesis of fumitremorgins, indole alkaloids that carry not only intriguing chemical structures, but also interesting biological and pharmacological activities. The biosynthesis of fumitremorgin-type alkaloids begins by condensation of the two amino acids L-tryptophan and L-proline to brevianamide F, catalyzed by the non-ribosomal peptide synthetase ftmA. Brevianamide F is then prenylated by the prenyltransferase ftmPT1/ftmB in the presence of dimethylallyl diphosphate, resulting in the formation of tryprostatin B. The three cytochrome P450 monooxygenases, ftmP450-1/ftmC, ftmP450-2/ftmE and ftmP450-3/FtmG, are responsible for the conversion of tryprostatin B to 6-hydroxytryprostatin B, tryprostatin A to fumitremorgin C and fumitremorgin C to 12,13-dihydroxyfumitremorgin C, respectively. The putative methyltransferase ftmMT/ftmD is expected for the conversion of 6-hydroxytryprostatin B to tryprostatin A. FtmPT2/FtmH catalyzes the prenylation of 12,13-dihydroxyfumitre-morgin C in the presence of dimethylallyl diphosphate, resulting in the formation of fumitremorgin B. Fumitremorgin B is further converted to verruculogen by ftmOx1/ftmF via the insertion of an endoperoxide bond between the two prenyl moieties. In some fungal species, verruculogen is further converted to fumitremorgin A, but the enzymes involved in this step have not been identified yet. The sequence is that of Fumitremorgin C monooxygenase from Aspergillus fumigatus (strain ATCC MYA-4609 / CBS 101355 / FGSC A1100 / Af293) (Neosartorya fumigata).